The sequence spans 630 residues: Elongation factor 4 (630 aa).

Residues 1–22 (MTVARNRAGAGPGKGSPISSFA) form a disordered region. Residues 30–211 (ARIRNFCIIA…EVVRQVPAPV (182 aa)) enclose the tr-type G domain. Residues 42-47 (DHGKST) and 158-161 (NKID) each bind GTP.

This sequence belongs to the TRAFAC class translation factor GTPase superfamily. Classic translation factor GTPase family. LepA subfamily.

It is found in the cell membrane. It catalyses the reaction GTP + H2O = GDP + phosphate + H(+). Functionally, required for accurate and efficient protein synthesis under certain stress conditions. May act as a fidelity factor of the translation reaction, by catalyzing a one-codon backward translocation of tRNAs on improperly translocated ribosomes. Back-translocation proceeds from a post-translocation (POST) complex to a pre-translocation (PRE) complex, thus giving elongation factor G a second chance to translocate the tRNAs correctly. Binds to ribosomes in a GTP-dependent manner. This Rhodococcus opacus (strain B4) protein is Elongation factor 4.